Reading from the N-terminus, the 293-residue chain is Energy-coupling factor transporter ATP-binding protein EcfA2 (293 aa).

Positions 3-246 (ITFQKVEHRY…ADELEKIGVD (244 aa)) constitute an ABC transporter domain. Residue 40–47 (GHTGSGKS) coordinates ATP.

It belongs to the ABC transporter superfamily. Energy-coupling factor EcfA family. Forms a stable energy-coupling factor (ECF) transporter complex composed of 2 membrane-embedded substrate-binding proteins (S component), 2 ATP-binding proteins (A component) and 2 transmembrane proteins (T component).

The protein resides in the cell membrane. In terms of biological role, ATP-binding (A) component of a common energy-coupling factor (ECF) ABC-transporter complex. Unlike classic ABC transporters this ECF transporter provides the energy necessary to transport a number of different substrates. In Bacillus cereus (strain ATCC 10987 / NRS 248), this protein is Energy-coupling factor transporter ATP-binding protein EcfA2.